The sequence spans 190 residues: Somatotropin (190 aa).

Residue His19 participates in Zn(2+) binding. Residues Cys52 and Cys163 are joined by a disulfide bond. Glu172 lines the Zn(2+) pocket. Cysteines 180 and 188 form a disulfide.

Belongs to the somatotropin/prolactin family.

It localises to the secreted. Functionally, growth hormone plays an important role in growth control and involved in the regulation of several anabolic processes. The chain is Somatotropin (GH) from Crocodylus novaeguineae (Crocodile).